The sequence spans 284 residues: MKRLPAVAGSFYESDPKKLKMQIEWSFRHNIGPRDIPKQTYEKKKRDNLFFVVPHAGYIYSGPVAAHSYYYLVSEGRPDVVIILGPNHTGLGSYVSAWPKGEWETPLGSVKIDEEILMQLVKESEVIDLDEKSHLYEHSIEVQLPFLQYFFDDDFKIVPIVIMMQTPEIAEFLADAIYNVMQKNPDKDIVVLASSDMNHYDPHEITVKKDEEAIEKIQQLDYKGLYEVVEGKDVTLCGYGPIMVNLILAKKFGKKAYILKHATSGDTSGPKDSVVGYLAARFGS.

It belongs to the MEMO1 family.

The chain is MEMO1 family protein M1425_2054 from Saccharolobus islandicus (strain M.14.25 / Kamchatka #1) (Sulfolobus islandicus).